A 176-amino-acid polypeptide reads, in one-letter code: KxDL motif-containing protein 1 (176 aa).

N-acetylmethionine is present on M1. The segment at 95–176 (HPEAFSHIPE…HTDDEEMPGE (82 aa)) is disordered. The segment covering 119 to 131 (STTTTIATSEQST) has biased composition (low complexity). Positions 132–145 (GSCDTSPDTVSPSL) are enriched in polar residues.

The protein belongs to the KXD1 family. Component of the BLOC-one-related complex (BORC) which is composed of BLOC1S1, BLOC1S2, BORCS5, BORCS6, BORCS7, BORCS8, KXD1 and SNAPIN. Associates with the BLOC-1 complex. Interacts with BLOC1S1. Interacts with DTNBP1/BLOC1S7 (via coiled-coil domain).

It localises to the lysosome membrane. Functionally, as part of the BORC complex may play a role in lysosomes movement and localization at the cell periphery. Associated with the cytosolic face of lysosomes, the BORC complex may recruit ARL8B and couple lysosomes to microtubule plus-end-directed kinesin motor. May also be involved in the biogenesis of lysosome-related organelles such as melanosomes. This is KxDL motif-containing protein 1 (KXD1) from Bos taurus (Bovine).